The chain runs to 1353 residues: Tenascin-R (1353 aa).

The signal sequence occupies residues 1-33 (MGTDSENPVLRNVLISFNLLLLGAVLKPFECRL). A coiled-coil region spans residues 132–156 (SLQELLSRIEMLEREVSMLRDQCNS). N-linked (GlcNAc...) asparagine glycans are attached at residues Asn179 and Asn197. 4 consecutive EGF-like domains span residues 187-198 (CICSEGWAGSNC), 234-260 (CPAG…GEDC), 265-291 (CPRD…GEDC), and 292-323 (GWLR…QDCS). Asn277 carries N-linked (GlcNAc...) asparagine glycosylation. Intrachain disulfides connect Cys296–Cys306 and Cys313–Cys322. Fibronectin type-III domains follow at residues 327-419 (PPEN…TPQG), 420-504 (LKFK…TLID), 505-594 (GPTQ…TEID), 595-686 (APKN…TELD), 687-776 (SPRD…VRPI), 777-863 (TQLH…TGMD), 864-952 (APKD…AMDA), 953-1037 (PLGV…TLLD), and 1038-1126 (PPTN…GGRV). 3 N-linked (GlcNAc...) asparagine glycosylation sites follow: Asn391, Asn469, and Asn580. 7 N-linked (GlcNAc...) asparagine glycosylation sites follow: Asn734, Asn790, Asn872, Asn1031, Asn1041, Asn1256, and Asn1342. The 216-residue stretch at 1124-1339 (GRVFANPQDC…FVEMKMRPYN (216 aa)) folds into the Fibrinogen C-terminal domain.

It belongs to the tenascin family. In terms of assembly, forms homodimers and homotrimers. Interacts with CNTN1, NFASC and CSPG5. As to expression, brain specific.

It localises to the secreted. It is found in the extracellular space. The protein localises to the extracellular matrix. Neural extracellular matrix (ECM) protein involved in interactions with different cells and matrix components. Involved in cell attachment and neurite formation. Interaction with CNTN1 enhances the neurite outgrowth. The polypeptide is Tenascin-R (TNR) (Gallus gallus (Chicken)).